A 395-amino-acid chain; its full sequence is Elongation factor Tu (395 aa).

Residues 10 to 204 (KPHVNIGTIG…VVDEYIPTPV (195 aa)) form the tr-type G domain. The G1 stretch occupies residues 19 to 26 (GHVDHGKT). 19–26 (GHVDHGKT) serves as a coordination point for GTP. A Mg(2+)-binding site is contributed by threonine 26. Positions 60 to 64 (GITIN) are G2. Residues 81–84 (DAPG) are G3. GTP contacts are provided by residues 81–85 (DAPGH) and 136–139 (NKTD). Residues 136–139 (NKTD) form a G4 region. The tract at residues 174–176 (SAL) is G5.

It belongs to the TRAFAC class translation factor GTPase superfamily. Classic translation factor GTPase family. EF-Tu/EF-1A subfamily. In terms of assembly, monomer.

It localises to the cytoplasm. It catalyses the reaction GTP + H2O = GDP + phosphate + H(+). Its function is as follows. GTP hydrolase that promotes the GTP-dependent binding of aminoacyl-tRNA to the A-site of ribosomes during protein biosynthesis. The protein is Elongation factor Tu of Lactiplantibacillus plantarum (strain ATCC BAA-793 / NCIMB 8826 / WCFS1) (Lactobacillus plantarum).